A 633-amino-acid chain; its full sequence is ATP-dependent RNA helicase mrh4, mitochondrial (633 aa).

The transit peptide at 1 to 38 (MNRLGRLSLPLRPQVCLLCQTQATMSSPLAGWQAVRSM) directs the protein to the mitochondrion. Residues 50–115 (MVLSSNVDKS…KQKPDSPLYK (66 aa)) are disordered. Residues 52 to 63 (LSSNVDKSSLKQ) show a composition bias toward polar residues. Residues 98-109 (RSGDSEDDKQKP) show a composition bias toward basic and acidic residues. The Q motif signature appears at 142–175 (SSFDQFPLLPVVRHSISSQALSRTGDIVPTPIQR). The region spanning 195–407 (SDHEPNFEQY…RKRYPDIRRL (213 aa)) is the Helicase ATP-binding domain. 208–215 (AETGSGKT) contacts ATP. Residues 354 to 357 (DEAD) carry the DEAD box motif. In terms of domain architecture, Helicase C-terminal spans 458 to 633 (FLAQAGPKVK…EGMFRGQALI (176 aa)).

This sequence belongs to the DEAD box helicase family. MRH4 subfamily.

It is found in the mitochondrion. It carries out the reaction ATP + H2O = ADP + phosphate + H(+). Functionally, ATP-binding RNA helicase involved in mitochondrial RNA metabolism. Required for maintenance of mitochondrial DNA. This is ATP-dependent RNA helicase mrh4, mitochondrial (mrh4) from Aspergillus niger (strain ATCC MYA-4892 / CBS 513.88 / FGSC A1513).